Consider the following 93-residue polypeptide: MITKDEVEHVGWLARIEIGAAEAEDYAVKLSSVLDYFGQLDEVDTEGVEPTYHVADIMNVFREDVVKPSLDQKDVLANTAEEKDGYIKAPRII.

Belongs to the GatC family. As to quaternary structure, heterotrimer of A, B and C subunits.

The enzyme catalyses L-glutamyl-tRNA(Gln) + L-glutamine + ATP + H2O = L-glutaminyl-tRNA(Gln) + L-glutamate + ADP + phosphate + H(+). It carries out the reaction L-aspartyl-tRNA(Asn) + L-glutamine + ATP + H2O = L-asparaginyl-tRNA(Asn) + L-glutamate + ADP + phosphate + 2 H(+). In terms of biological role, allows the formation of correctly charged Asn-tRNA(Asn) or Gln-tRNA(Gln) through the transamidation of misacylated Asp-tRNA(Asn) or Glu-tRNA(Gln) in organisms which lack either or both of asparaginyl-tRNA or glutaminyl-tRNA synthetases. The reaction takes place in the presence of glutamine and ATP through an activated phospho-Asp-tRNA(Asn) or phospho-Glu-tRNA(Gln). This chain is Aspartyl/glutamyl-tRNA(Asn/Gln) amidotransferase subunit C, found in Methanococcoides burtonii (strain DSM 6242 / NBRC 107633 / OCM 468 / ACE-M).